Reading from the N-terminus, the 114-residue chain is DNA-binding protein Mbur_0117 (114 aa).

The interval glutamate 14 to alanine 37 is disordered. Residues glutamine 16–alanine 35 show a composition bias toward low complexity.

This sequence belongs to the PDCD5 family.

The protein is DNA-binding protein Mbur_0117 of Methanococcoides burtonii (strain DSM 6242 / NBRC 107633 / OCM 468 / ACE-M).